The primary structure comprises 1406 residues: DNA-directed RNA polymerase subunit beta' (1406 aa).

The Zn(2+) site is built by C70, C72, C85, and C88. Mg(2+) is bound by residues D460, D462, and D464. Zn(2+)-binding residues include C814, C888, C895, and C898.

This sequence belongs to the RNA polymerase beta' chain family. As to quaternary structure, the RNAP catalytic core consists of 2 alpha, 1 beta, 1 beta' and 1 omega subunit. When a sigma factor is associated with the core the holoenzyme is formed, which can initiate transcription. The cofactor is Mg(2+). Requires Zn(2+) as cofactor.

The enzyme catalyses RNA(n) + a ribonucleoside 5'-triphosphate = RNA(n+1) + diphosphate. Functionally, DNA-dependent RNA polymerase catalyzes the transcription of DNA into RNA using the four ribonucleoside triphosphates as substrates. This chain is DNA-directed RNA polymerase subunit beta', found in Sodalis glossinidius (strain morsitans).